The sequence spans 212 residues: Synaptosomal-associated protein 25 (212 aa).

T-SNARE coiled-coil homology domains follow at residues 26-88 (QGVA…LSGM) and 148-210 (DARE…AHQL).

The protein belongs to the SNAP-25 family. As to expression, exclusively found in brain and ganglia.

The protein resides in the synapse. The protein localises to the synaptosome. May play an important role in the synaptic function of specific neuronal systems. Associates with proteins involved in vesicle docking and membrane fusion. This is Synaptosomal-associated protein 25 (Snap25) from Drosophila melanogaster (Fruit fly).